We begin with the raw amino-acid sequence, 255 residues long: Taurine import ATP-binding protein TauB (255 aa).

The ABC transporter domain maps to 2 to 229; the sequence is LQISHLYADY…RFVAGESSRS (228 aa). 34-41 contributes to the ATP binding site; sequence GPSGCGKT.

It belongs to the ABC transporter superfamily. Taurine importer (TC 3.A.1.17.1) family. In terms of assembly, the complex is composed of two ATP-binding proteins (TauB), two transmembrane proteins (TauC) and a solute-binding protein (TauA).

Its subcellular location is the cell inner membrane. The catalysed reaction is taurine(out) + ATP + H2O = taurine(in) + ADP + phosphate + H(+). In terms of biological role, part of the ABC transporter complex TauABC involved in taurine import. Responsible for energy coupling to the transport system. The chain is Taurine import ATP-binding protein TauB from Shigella boydii serotype 4 (strain Sb227).